The following is a 493-amino-acid chain: 3-octaprenyl-4-hydroxybenzoate carboxy-lyase (493 aa).

Asn-172 serves as a coordination point for Mn(2+). Residues Ile-175–Arg-177, Arg-189–Leu-191, and Arg-194–Gly-195 contribute to the prenylated FMN site. Glu-238 lines the Mn(2+) pocket. Asp-287 serves as the catalytic Proton donor.

This sequence belongs to the UbiD family. In terms of assembly, homohexamer. It depends on prenylated FMN as a cofactor. The cofactor is Mn(2+).

The protein localises to the cell membrane. The catalysed reaction is a 4-hydroxy-3-(all-trans-polyprenyl)benzoate + H(+) = a 2-(all-trans-polyprenyl)phenol + CO2. The protein operates within cofactor biosynthesis; ubiquinone biosynthesis. Functionally, catalyzes the decarboxylation of 3-octaprenyl-4-hydroxy benzoate to 2-octaprenylphenol, an intermediate step in ubiquinone biosynthesis. The sequence is that of 3-octaprenyl-4-hydroxybenzoate carboxy-lyase from Shewanella sediminis (strain HAW-EB3).